A 211-amino-acid chain; its full sequence is Regulator of G-protein signaling 2 (211 aa).

The segment at lysine 32–glutamine 66 is necessary for membrane association. The necessary to inhibit protein synthesis stretch occupies residues leucine 79–cysteine 116. Positions alanine 83 to cysteine 199 constitute an RGS domain.

As to quaternary structure, interacts with GNAQ. Does not interact with GNAI1 and GNAI3. Interacts with EIF2B5. Interacts with PRKG1 (isoform alpha). In terms of processing, phosphorylated by protein kinase C. Phosphorylation by PRKG1 leads to activation of RGS2 activity.

Its subcellular location is the cell membrane. The protein localises to the cytoplasm. The protein resides in the nucleus. It localises to the nucleolus. Its function is as follows. Regulates G protein-coupled receptor signaling cascades. Inhibits signal transduction by increasing the GTPase activity of G protein alpha subunits, thereby driving them into their inactive GDP-bound form. It is involved in the negative regulation of the angiotensin-activated signaling pathway. Plays a role in the regulation of blood pressure in response to signaling via G protein-coupled receptors and GNAQ. Plays a role in regulating the constriction and relaxation of vascular smooth muscle. Binds EIF2B5 and blocks its activity, thereby inhibiting the translation of mRNA into protein. The polypeptide is Regulator of G-protein signaling 2 (Rgs2) (Rattus norvegicus (Rat)).